The sequence spans 131 residues: Small ribosomal subunit protein bS18 (131 aa).

A compositionally biased stretch (polar residues) spans 1–10 (MSNGTDSKTA). Residues 1 to 60 (MSNGTDSKTASAPPARSGGGFGGGGSRGGDRGDRGDRGGDRGDRGGGLGGDDDKRGGGRG) are disordered. Residues 17–27 (SGGGFGGGGSR) show a composition bias toward gly residues. The span at 28–44 (GGDRGDRGDRGGDRGDR) shows a compositional bias: basic and acidic residues.

Belongs to the bacterial ribosomal protein bS18 family. As to quaternary structure, part of the 30S ribosomal subunit. Forms a tight heterodimer with protein bS6.

Its function is as follows. Binds as a heterodimer with protein bS6 to the central domain of the 16S rRNA, where it helps stabilize the platform of the 30S subunit. This Myxococcus xanthus (strain DK1622) protein is Small ribosomal subunit protein bS18.